We begin with the raw amino-acid sequence, 99 residues long: Putative transmembrane protein ORF13 (99 aa).

The next 3 helical transmembrane spans lie at 8-28 (IATF…MAGI), 42-62 (LGLF…YIIV), and 73-93 (GPIT…AIIA).

The protein localises to the host membrane. This His1 virus (isolate Australia/Victoria) (His1V) protein is Putative transmembrane protein ORF13.